The chain runs to 443 residues: Probable glycine dehydrogenase (decarboxylating) subunit 1 (443 aa).

It belongs to the GcvP family. N-terminal subunit subfamily. The glycine cleavage system is composed of four proteins: P, T, L and H. In this organism, the P 'protein' is a heterodimer of two subunits.

It catalyses the reaction N(6)-[(R)-lipoyl]-L-lysyl-[glycine-cleavage complex H protein] + glycine + H(+) = N(6)-[(R)-S(8)-aminomethyldihydrolipoyl]-L-lysyl-[glycine-cleavage complex H protein] + CO2. In terms of biological role, the glycine cleavage system catalyzes the degradation of glycine. The P protein binds the alpha-amino group of glycine through its pyridoxal phosphate cofactor; CO(2) is released and the remaining methylamine moiety is then transferred to the lipoamide cofactor of the H protein. The protein is Probable glycine dehydrogenase (decarboxylating) subunit 1 of Oleidesulfovibrio alaskensis (strain ATCC BAA-1058 / DSM 17464 / G20) (Desulfovibrio alaskensis).